We begin with the raw amino-acid sequence, 304 residues long: dTDP-4-dehydrorhamnose reductase (304 aa).

NADH-binding positions include 15-17 (GQL), 41-42 (DI), and 63-65 (AYT). NADPH is bound by residues 16-17 (QL), 41-42 (DI), and 63-65 (AYT). Residue 104 to 105 (TD) coordinates dTDP-beta-L-rhamnose. NADH-binding residues include Tyr-132 and Lys-136. The NADPH site is built by Tyr-132 and Lys-136. Catalysis depends on Tyr-132, which acts as the Proton donor/acceptor. Trp-157 contributes to the dTDP-beta-L-rhamnose binding site.

Belongs to the dTDP-4-dehydrorhamnose reductase family. Mg(2+) is required as a cofactor.

It catalyses the reaction dTDP-beta-L-rhamnose + NADP(+) = dTDP-4-dehydro-beta-L-rhamnose + NADPH + H(+). Its pathway is carbohydrate biosynthesis; dTDP-L-rhamnose biosynthesis. Involved in the biosynthesis of the dTDP-L-rhamnose which is a component of the critical linker, D-N-acetylglucosamine-L-rhamnose disaccharide, which connects the galactan region of arabinogalactan to peptidoglycan via a phosphodiester linkage. Catalyzes the reduction of dTDP-6-deoxy-L-lyxo-4-hexulose to yield dTDP-L-rhamnose. The sequence is that of dTDP-4-dehydrorhamnose reductase from Mycobacterium tuberculosis (strain CDC 1551 / Oshkosh).